Consider the following 184-residue polypeptide: Vacuolar protein sorting-associated protein 68 (184 aa).

Met1 carries the N-acetylmethionine modification. A Phosphoserine modification is found at Ser8. A helical membrane pass occupies residues 26–46 (GVYLSGALYALGFWIFLDAVL). N-linked (GlcNAc...) asparagine glycosylation is present at Asn52. The next 3 membrane-spanning stretches (helical) occupy residues 56–76 (VHVTFIDWIPFLCSTLGTLIV), 115–135 (LFFGFALLAGGLSGSIVVLII), and 150–170 (MGVNNVLGNVCILLSCVVLWI).

This sequence belongs to the UPF0220 family.

It is found in the vacuole membrane. The protein localises to the mitochondrion. Its function is as follows. Involved in vacuolar protein sorting. This chain is Vacuolar protein sorting-associated protein 68 (VPS68), found in Saccharomyces cerevisiae (strain ATCC 204508 / S288c) (Baker's yeast).